A 951-amino-acid chain; its full sequence is Cation channel sperm-associated auxiliary subunit epsilon (951 aa).

The signal sequence occupies residues 1–19 (MSAREVAVLLLWLSCYGSA). Topologically, residues 20-903 (LWRYSTNSPN…ETFGLIPSPS (884 aa)) are extracellular. 4 cysteine pairs are disulfide-bonded: cysteine 57-cysteine 71, cysteine 101-cysteine 206, cysteine 246-cysteine 336, and cysteine 410-cysteine 413. N-linked (GlcNAc...) asparagine glycans are attached at residues asparagine 61 and asparagine 114. N-linked (GlcNAc...) asparagine glycans are attached at residues asparagine 414, asparagine 472, asparagine 487, asparagine 493, and asparagine 535. 4 disulfide bridges follow: cysteine 583–cysteine 690, cysteine 703–cysteine 885, cysteine 719–cysteine 752, and cysteine 804–cysteine 835. Asparagine 796 carries an N-linked (GlcNAc...) asparagine glycan. 3 N-linked (GlcNAc...) asparagine glycosylation sites follow: asparagine 854, asparagine 881, and asparagine 886. Residues 904 to 924 (VYLVASFLFVLMLLFFTILVL) traverse the membrane as a helical segment. Topologically, residues 925 to 951 (SYFRYMRIYRRYIYEPLHKPQRKRKKN) are cytoplasmic.

Belongs to the CATSPERD family. As to quaternary structure, component of the CatSper complex or CatSpermasome composed of the core pore-forming members CATSPER1, CATSPER2, CATSPER3 and CATSPER4 as well as auxiliary members CATSPERB, CATSPERG, CATSPERD, CATSPERE, CATSPERZ, C2CD6/CATSPERT, TMEM249, TMEM262 and EFCAB9. HSPA1 may be an additional auxiliary complex member. The core complex members CATSPER1, CATSPER2, CATSPER3 and CATSPER4 form a heterotetrameric channel. The auxiliary CATSPERB, CATSPERG, CATSPERD and CATSPERE subunits form a pavilion-like structure over the pore which stabilizes the complex through interactions with CATSPER4, CATSPER3, CATSPER1 and CATSPER2 respectively. TMEM262/CATSPERH interacts with CATSPERB, further stabilizing the complex. C2CD6/CATSPERT interacts at least with CATSPERD and is required for targeting the CatSper complex in the flagellar membrane.

It localises to the cell projection. It is found in the cilium. The protein resides in the flagellum membrane. Auxiliary component of the CatSper complex, a complex involved in sperm cell hyperactivation. Sperm cell hyperactivation is needed for sperm motility which is essential late in the preparation of sperm for fertilization. In Homo sapiens (Human), this protein is Cation channel sperm-associated auxiliary subunit epsilon.